The sequence spans 75 residues: UPF0235 protein MSMEG_3845 (75 aa).

This sequence belongs to the UPF0235 family.

This Mycolicibacterium smegmatis (strain ATCC 700084 / mc(2)155) (Mycobacterium smegmatis) protein is UPF0235 protein MSMEG_3845.